We begin with the raw amino-acid sequence, 145 residues long: 3-hydroxyacyl-[acyl-carrier-protein] dehydratase FabZ (145 aa).

His49 is a catalytic residue.

Belongs to the thioester dehydratase family. FabZ subfamily.

The protein localises to the cytoplasm. The catalysed reaction is a (3R)-hydroxyacyl-[ACP] = a (2E)-enoyl-[ACP] + H2O. Involved in unsaturated fatty acids biosynthesis. Catalyzes the dehydration of short chain beta-hydroxyacyl-ACPs and long chain saturated and unsaturated beta-hydroxyacyl-ACPs. In Rickettsia africae (strain ESF-5), this protein is 3-hydroxyacyl-[acyl-carrier-protein] dehydratase FabZ.